The primary structure comprises 557 residues: MMATSGIANRVKTWLISTWHVKVPDPWLEACINWIQEENGSSLLQAEINKQVFEQWLLTDLRDLEFPVLPANITDSLKCELNGFHAVQMDSLVDISLPAYSQLQKLKGKDSTNEQVTCTTQQSQKPWEAKPTRMLMLQLTDGTQHIQAMEYRPIQALNANLSPGTKMVLQGTIVCRLGVLLLKPENVKVLGGEVEALVAEYTQTKVLSRLIGVEDNTVAQHSNVQEHAAGVAAGELGQALGPSDEDLLASLEENEEFSINNGVPSESGYYSRNENSSISSSTQHQTQDSIVRCWVDDDILEFSINNGVPSESGYYSRNENSSISSSTQHQTQDSIVRQTSFPMLDQTVVHVNVANNHAIEEQFDIDDELFLEEEIQRELEEMSMSQAEVTHGSTDLPTTLSATSHASSASCTSDQNNIDIPPYTYLSTILASKSRSITCVKLKSFIVTLNGNLSHSCGLWNIKAKISDGTGYLNVEFSDDVLTELIGFTVPEMKTLKKDPSQQSTLMEGLQKCQRMLTDFCGVMTVSYNPAKEEAVVLSLQDVTEEIMQSLQKLLRS.

3 stretches are compositionally biased toward polar residues: residues 259 to 275 (INNG…RNEN), 310 to 320 (SESGYYSRNEN), and 383 to 397 (SMSQ…TDLP). 3 disordered regions span residues 259-284 (INNG…STQH), 310-329 (SESG…STQH), and 382-413 (MSMS…SCTS). A compositionally biased stretch (low complexity) spans 398–413 (TTLSATSHASSASCTS).

This sequence belongs to the RMI1 family. In terms of assembly, component of the RMI complex, containing at least TOP3A, RMI1 and RMI2.

The protein resides in the nucleus. Functionally, essential component of the RMI complex, a complex that plays an important role in the processing of homologous recombination intermediates to limit DNA crossover formation in cells. Promotes TOP3A binding to double Holliday junctions (DHJ) and hence stimulates TOP3A-mediated dissolution. Required for BLM phosphorylation during mitosis. Within the BLM complex, required for BLM and TOP3A stability. The sequence is that of RecQ-mediated genome instability protein 1 (rmi1) from Xenopus laevis (African clawed frog).